A 268-amino-acid polypeptide reads, in one-letter code: Forkhead box protein R1 (268 aa).

The segment at glutamate 91 to arginine 126 is disordered. Residues arginine 149–glutamine 248 constitute a DNA-binding region (fork-head).

Expressed in adult germ cells (at protein level). Expressed in heart, liver, lung and embryonic brain.

The protein localises to the nucleus. The protein resides in the cytoplasm. Its subcellular location is the perinuclear region. Transcription factor which acts as both an activator and a repressor. Activates transcription of a number of genes including the heat shock chaperones HSPA1A and HSPA6 and the antioxidant NADPH-dependent reductase DHRS2 which are involved in protection against oxidative stress. Required for normal brain development. The protein is Forkhead box protein R1 (Foxr1) of Mus musculus (Mouse).